The primary structure comprises 243 residues: 1-(5-phosphoribosyl)-5-[(5-phosphoribosylamino)methylideneamino] imidazole-4-carboxamide isomerase (243 aa).

The active-site Proton acceptor is the Asp8. The active-site Proton donor is the Asp129.

It belongs to the HisA/HisF family.

It is found in the cytoplasm. The catalysed reaction is 1-(5-phospho-beta-D-ribosyl)-5-[(5-phospho-beta-D-ribosylamino)methylideneamino]imidazole-4-carboxamide = 5-[(5-phospho-1-deoxy-D-ribulos-1-ylimino)methylamino]-1-(5-phospho-beta-D-ribosyl)imidazole-4-carboxamide. It functions in the pathway amino-acid biosynthesis; L-histidine biosynthesis; L-histidine from 5-phospho-alpha-D-ribose 1-diphosphate: step 4/9. In Syntrophotalea carbinolica (strain DSM 2380 / NBRC 103641 / GraBd1) (Pelobacter carbinolicus), this protein is 1-(5-phosphoribosyl)-5-[(5-phosphoribosylamino)methylideneamino] imidazole-4-carboxamide isomerase.